The following is a 575-amino-acid chain: Alpha-(1,6)-fucosyltransferase (575 aa).

The Cytoplasmic portion of the chain corresponds to 1–9 (MRPWTGSWR). The chain crosses the membrane as a helical; Signal-anchor for type II membrane protein span at residues 10 to 30 (WIMLILFAWGTLLFYIGGHLV). The Lumenal portion of the chain corresponds to 31 to 575 (RDNDHPDHSS…KVPHVPEAEK (545 aa)). Intrachain disulfides connect C204/C266, C212/C230, and C218/C222. One can recognise a GT23 domain in the interval 206-493 (KAKKLVCNIN…PDASANFHSL (288 aa)). S278 carries the phosphoserine modification. An SH3-binding motif is present at residues 299–305 (PRPPYLP). The interval 365-366 (RR) is important for donor substrate binding. An intrachain disulfide couples C465 to C472. In terms of domain architecture, SH3 spans 502 to 563 (QNAHNQIAIY…PSYKVREKIE (62 aa)).

The protein belongs to the glycosyltransferase 23 family. In terms of processing, tyrosine phosphorylated by PKDCC/VLK. As to expression, highest expression found in brain. Also found in heart, lung, spleen and kidney.

Its subcellular location is the golgi apparatus. It localises to the golgi stack membrane. It catalyses the reaction N(4)-{beta-D-GlcNAc-(1-&gt;2)-alpha-D-Man-(1-&gt;3)-[beta-D-GlcNAc-(1-&gt;2)-alpha-D-Man-(1-&gt;6)]-beta-D-Man-(1-&gt;4)-beta-D-GlcNAc-(1-&gt;4)-beta-D-GlcNAc}-L-asparaginyl-[protein] + GDP-beta-L-fucose = an N(4)-{beta-D-GlcNAc-(1-&gt;2)-alpha-D-Man-(1-&gt;3)-[beta-D-GlcNAc-(1-&gt;2)-alpha-D-Man-(1-&gt;6)]-beta-D-Man-(1-&gt;4)-beta-D-GlcNAc-(1-&gt;4)-[alpha-L-Fuc-(1-&gt;6)]-beta-D-GlcNAc}-L-asparaginyl-[protein] + GDP + H(+). The protein operates within protein modification; protein glycosylation. Functionally, catalyzes the addition of fucose in alpha 1-6 linkage to the first GlcNAc residue, next to the peptide chains in N-glycans. In Bos taurus (Bovine), this protein is Alpha-(1,6)-fucosyltransferase (FUT8).